We begin with the raw amino-acid sequence, 239 residues long: MNKNIVIKSMAALAILTSVTGINAAVVEETQQIANAEKNVTQVKDTNNFPYNGVVSFKDATGFVIGKNTIITNKHVSKDYKVGDRITAHPNGDKGNGGIYKIKSISDYPGDEDISVMNIEEQAVERGPKGFNFNENVQAFNFAKDAKVDDKIKVIGYPLPAQNSFKQFESTGTIKRIKDNILNFDAYIEPGNSGSPVLNSNNEVIGVVYGGIGKIGSEYNGAVYFTPQIKDFIQKHIEQ.

The N-terminal stretch at 1 to 36 (MNKNIVIKSMAALAILTSVTGINAAVVEETQQIANA) is a signal peptide. Active-site charge relay system residues include histidine 75, aspartate 113, and serine 193.

It belongs to the peptidase S1B family.

Its subcellular location is the secreted. This chain is Serine protease SplC (splC), found in Staphylococcus aureus.